A 137-amino-acid polypeptide reads, in one-letter code: MRHYEIVFMVHPDQSEQVPAMIERYTSVITEDGGKVHRLEDWGRRHLAYPINKIHKAHYVLMNIECSQAAMDELTHNFRFNDAIIRDLILRRDEAVTDLSPMKAAESREDRRSGGDDRPRRSADSEERQSASQDEEE.

The interval 99–137 (LSPMKAAESREDRRSGGDDRPRRSADSEERQSASQDEEE) is disordered. Residues 105–129 (AESREDRRSGGDDRPRRSADSEERQ) show a composition bias toward basic and acidic residues.

It belongs to the bacterial ribosomal protein bS6 family.

In terms of biological role, binds together with bS18 to 16S ribosomal RNA. The sequence is that of Small ribosomal subunit protein bS6 from Marinobacter nauticus (strain ATCC 700491 / DSM 11845 / VT8) (Marinobacter aquaeolei).